Consider the following 273-residue polypeptide: DnaJ homolog subfamily C member 27 (273 aa).

Residues 1 to 18 form a required for interaction with MAPK1 region; sequence MESNVPKRKEPLKSLRIK. Residues 23–30, 71–75, and 134–137 contribute to the GTP site; these read GNAEVGKS, DMAGH, and NKID. Positions 217-273 constitute a J domain; that stretch reads DSWEMLGVRPGASREEVNKAYRKLAVLLHPDKCVAPGSEDAFKAVVNARTALLKNIK.

The protein belongs to the small GTPase superfamily. Rab family. As to quaternary structure, interacts directly with MAPK1 (wild-type and kinase-deficient forms). Interacts directly (in GTP-bound form) with MAP2K1 (wild-type and kinase-deficient forms).

It is found in the nucleus. In terms of biological role, GTPase which can activate the MEK/ERK pathway and induce cell transformation when overexpressed. May act as a nuclear scaffold for MAPK1, probably by association with MAPK1 nuclear export signal leading to enhanced ERK1/ERK2 signaling. The polypeptide is DnaJ homolog subfamily C member 27 (Dnajc27) (Rattus norvegicus (Rat)).